Reading from the N-terminus, the 330-residue chain is Putative protein N-methyltransferase FAM86B2 (330 aa).

Met1 carries the post-translational modification N-acetylmethionine. Residues Trp139, Gly165–Gly167, Trp228, and Ala247 contribute to the S-adenosyl-L-methionine site.

It belongs to the class I-like SAM-binding methyltransferase superfamily. EEF2KMT family. In terms of assembly, interacts with EEF2KMT.

This is Putative protein N-methyltransferase FAM86B2 (FAM86B2) from Homo sapiens (Human).